The chain runs to 201 residues: 3-isopropylmalate dehydratase small subunit (201 aa).

Belongs to the LeuD family. LeuD type 1 subfamily. In terms of assembly, heterodimer of LeuC and LeuD.

The enzyme catalyses (2R,3S)-3-isopropylmalate = (2S)-2-isopropylmalate. It functions in the pathway amino-acid biosynthesis; L-leucine biosynthesis; L-leucine from 3-methyl-2-oxobutanoate: step 2/4. Catalyzes the isomerization between 2-isopropylmalate and 3-isopropylmalate, via the formation of 2-isopropylmaleate. This Nitrobacter winogradskyi (strain ATCC 25391 / DSM 10237 / CIP 104748 / NCIMB 11846 / Nb-255) protein is 3-isopropylmalate dehydratase small subunit.